The primary structure comprises 576 residues: MRASKYHLNTLKEAPAEAEIASHQLMTRAGMIRKLAGGIYTYMPLGLKVIRKIEGIVREEMNAAGAIELLMPVVQPAELWMESGRWEQYGAELLRIKDRHQRDFVLQPTSEEVITDIARNEIQSYRQLPLNFYHIQTKFRDERRPRFGLMRGREFTMKDAYSFDRDEAGAQRSYDIMYAAYQRIFQRLSLEFRAVAADTGSIGGSRSHEFQVIADTGEDLIVYNPESDYAANIELAEAPALLAARAAPAQDLEAVPTPGAAKCEDVAKLLGLPLARTIKSIVLAVDQPEGPAQVWLLLLRGDHELNEIKAGKLPGLAGFRFATETEIVDHFGCKPGYLGPIKTARPVHVVADRTVANMADFVCGANREDYHYQGANWGRDLPEPELVADLRNVVEGDPSPDGKGALSIQRGIEVGHVFFLGTKYSEALKATFLDDNGKPAVLQMGCYGIGVTRIVGAAIEQNHDARGIIWPRAIAPYEVVICPVGWGKSETVRDTALALYEALRARGVDVMLDDRDSRPGVMFAEWELIGVPLRVTVGERGLNEGVVELQARREAEAAKVPVDQALAQTLAKLDLL.

The protein belongs to the class-II aminoacyl-tRNA synthetase family. ProS type 1 subfamily. Homodimer.

Its subcellular location is the cytoplasm. The catalysed reaction is tRNA(Pro) + L-proline + ATP = L-prolyl-tRNA(Pro) + AMP + diphosphate. In terms of biological role, catalyzes the attachment of proline to tRNA(Pro) in a two-step reaction: proline is first activated by ATP to form Pro-AMP and then transferred to the acceptor end of tRNA(Pro). As ProRS can inadvertently accommodate and process non-cognate amino acids such as alanine and cysteine, to avoid such errors it has two additional distinct editing activities against alanine. One activity is designated as 'pretransfer' editing and involves the tRNA(Pro)-independent hydrolysis of activated Ala-AMP. The other activity is designated 'posttransfer' editing and involves deacylation of mischarged Ala-tRNA(Pro). The misacylated Cys-tRNA(Pro) is not edited by ProRS. This chain is Proline--tRNA ligase, found in Bordetella parapertussis (strain 12822 / ATCC BAA-587 / NCTC 13253).